A 441-amino-acid polypeptide reads, in one-letter code: D-inositol 3-phosphate glycosyltransferase (441 aa).

1D-myo-inositol 3-phosphate is bound at residue His-38. UDP-N-acetyl-alpha-D-glucosamine contacts are provided by residues 44–45 (QP) and Gly-52. 1D-myo-inositol 3-phosphate is bound by residues 49 to 54 (DAGGMN), Lys-107, Tyr-140, Thr-164, and Arg-184. The UDP-N-acetyl-alpha-D-glucosamine site is built by Arg-258, Lys-263, and Gln-316. Mg(2+)-binding residues include Phe-325, Gln-326, and Ala-328. Residues Glu-338 and Glu-346 each contribute to the UDP-N-acetyl-alpha-D-glucosamine site. Mg(2+) is bound at residue Thr-352.

Belongs to the glycosyltransferase group 1 family. MshA subfamily. As to quaternary structure, homodimer.

It carries out the reaction 1D-myo-inositol 3-phosphate + UDP-N-acetyl-alpha-D-glucosamine = 1D-myo-inositol 2-acetamido-2-deoxy-alpha-D-glucopyranoside 3-phosphate + UDP + H(+). Catalyzes the transfer of a N-acetyl-glucosamine moiety to 1D-myo-inositol 3-phosphate to produce 1D-myo-inositol 2-acetamido-2-deoxy-glucopyranoside 3-phosphate in the mycothiol biosynthesis pathway. The chain is D-inositol 3-phosphate glycosyltransferase from Mycolicibacterium paratuberculosis (strain ATCC BAA-968 / K-10) (Mycobacterium paratuberculosis).